The following is a 162-amino-acid chain: Cyclic pyranopterin monophosphate synthase (162 aa).

Residues 75–77 and 113–114 each bind substrate; these read LCH and ME. Residue D128 is part of the active site.

This sequence belongs to the MoaC family. As to quaternary structure, homohexamer; trimer of dimers.

It carries out the reaction (8S)-3',8-cyclo-7,8-dihydroguanosine 5'-triphosphate = cyclic pyranopterin phosphate + diphosphate. It participates in cofactor biosynthesis; molybdopterin biosynthesis. Its function is as follows. Catalyzes the conversion of (8S)-3',8-cyclo-7,8-dihydroguanosine 5'-triphosphate to cyclic pyranopterin monophosphate (cPMP). This chain is Cyclic pyranopterin monophosphate synthase, found in Klebsiella pneumoniae (strain 342).